The primary structure comprises 407 residues: Elongation factor Tu, chloroplastic (407 aa).

The tr-type G domain occupies 10–212; that stretch reads KPHVNIGTIG…SVDNYIPAPE (203 aa). A G1 region spans residues 19-26; the sequence is GHVDHGKT. Position 19–26 (19–26) interacts with GTP; sequence GHVDHGKT. Thr-26 serves as a coordination point for Mg(2+). Residues 59 to 63 form a G2 region; that stretch reads GITIN. The G3 stretch occupies residues 80-83; sequence DCPG. GTP contacts are provided by residues 80–84 and 135–138; these read DCPGH and NKAD. Residues 135–138 are G4; sequence NKAD. Residues 173–175 are G5; sequence SAL.

The protein belongs to the TRAFAC class translation factor GTPase superfamily. Classic translation factor GTPase family. EF-Tu/EF-1A subfamily.

The protein resides in the plastid. It is found in the chloroplast. It carries out the reaction GTP + H2O = GDP + phosphate + H(+). In terms of biological role, GTP hydrolase that promotes the GTP-dependent binding of aminoacyl-tRNA to the A-site of ribosomes during protein biosynthesis. The polypeptide is Elongation factor Tu, chloroplastic (tufA) (Emiliania huxleyi (Coccolithophore)).